Here is a 329-residue protein sequence, read N- to C-terminus: Beta-ketoacyl-[acyl-carrier-protein] synthase III (329 aa).

Active-site residues include Cys-113 and His-255. The tract at residues 256-260 (QANQR) is ACP-binding. The active site involves Asn-285.

Belongs to the thiolase-like superfamily. FabH family. As to quaternary structure, homodimer.

The protein resides in the cytoplasm. It carries out the reaction malonyl-[ACP] + acetyl-CoA + H(+) = 3-oxobutanoyl-[ACP] + CO2 + CoA. Its pathway is lipid metabolism; fatty acid biosynthesis. Functionally, catalyzes the condensation reaction of fatty acid synthesis by the addition to an acyl acceptor of two carbons from malonyl-ACP. Catalyzes the first condensation reaction which initiates fatty acid synthesis and may therefore play a role in governing the total rate of fatty acid production. Possesses both acetoacetyl-ACP synthase and acetyl transacylase activities. Its substrate specificity determines the biosynthesis of branched-chain and/or straight-chain of fatty acids. The polypeptide is Beta-ketoacyl-[acyl-carrier-protein] synthase III (Chlorobium phaeovibrioides (strain DSM 265 / 1930) (Prosthecochloris vibrioformis (strain DSM 265))).